An 886-amino-acid chain; its full sequence is Cytosolic carboxypeptidase-like protein 5 (886 aa).

In terms of domain architecture, Peptidase M14 spans 157-570 (YPFSYSDCQE…AMAIAALDMA (414 aa)). Residues histidine 252 and glutamate 255 each coordinate Zn(2+). The segment covering 344 to 354 (SQSSSEHQPSS) has biased composition (low complexity). A disordered region spans residues 344-364 (SQSSSEHQPSSCLPPDAPVSD). Residue histidine 434 coordinates Zn(2+). Catalysis depends on glutamate 516, which acts as the Proton donor/acceptor. Disordered stretches follow at residues 605 to 734 (STLN…SSHK) and 784 to 848 (LQAR…FSPI). The segment covering 631–640 (CSENTLSRAR) has biased composition (polar residues). The span at 641–666 (SFSTGTSAGGSSSSQQNSPQMKNSPS) shows a compositional bias: low complexity. A compositionally biased stretch (basic and acidic residues) spans 696–705 (REPRSQDRRR). The segment covering 714–732 (PAGSLAPSPAPTSSGPASS) has biased composition (low complexity). Serine 841 is modified (phosphoserine).

This sequence belongs to the peptidase M14 family. The cofactor is Zn(2+). In terms of tissue distribution, expressed in brain.

It is found in the cytoplasm. The protein localises to the cytosol. It localises to the nucleus. The protein resides in the cytoskeleton. Its subcellular location is the spindle. It is found in the midbody. The catalysed reaction is gamma-L-glutamyl-L-glutamyl-[protein] + H2O = L-glutamyl-[protein] + L-glutamate. The enzyme catalyses (L-glutamyl)(n+1)-gamma-L-glutamyl-L-glutamyl-[protein] + H2O = (L-glutamyl)(n)-gamma-L-glutamyl-L-glutamyl-[protein] + L-glutamate. It carries out the reaction C-terminal L-alpha-aminoacyl-L-glutamyl-[tubulin] + H2O = C-terminal L-alpha-aminoacyl-[tubulin] + L-glutamate. It catalyses the reaction C-terminal L-alpha-aminoacyl-L-glutamyl-L-glutamyl-[tubulin] + H2O = C-terminal L-alpha-aminoacyl-L-glutamyl-[tubulin] + L-glutamate. Its function is as follows. Metallocarboxypeptidase that mediates deglutamylation of tubulin and non-tubulin target proteins. Catalyzes the removal of polyglutamate side chains present on the gamma-carboxyl group of glutamate residues within the C-terminal tail of alpha- and beta-tubulin. Cleaves alpha- and gamma-linked polyglutamate tubulin side-chain, as well as the branching point glutamate. Also catalyzes the removal of alpha-linked glutamate residues from the carboxy-terminus of alpha-tubulin. Mediates deglutamylation of nucleotidyltransferase CGAS, leading to CGAS antiviral defense response activation. The polypeptide is Cytosolic carboxypeptidase-like protein 5 (Homo sapiens (Human)).